Here is a 246-residue protein sequence, read N- to C-terminus: Zinc import ATP-binding protein ZnuC (246 aa).

Positions 24 to 244 (LKIENLALAY…TLGEIFSSYI (221 aa)) constitute an ABC transporter domain. Residue 56 to 63 (GPNGGGKT) coordinates ATP.

Belongs to the ABC transporter superfamily. Zinc importer (TC 3.A.1.15.5) family. In terms of assembly, the complex is composed of two ATP-binding proteins (ZnuC), two transmembrane proteins (ZnuB) and a solute-binding protein (ZnuA).

It is found in the cell membrane. It catalyses the reaction Zn(2+)(out) + ATP(in) + H2O(in) = Zn(2+)(in) + ADP(in) + phosphate(in) + H(+)(in). Functionally, part of the ABC transporter complex ZnuABC involved in zinc import. Responsible for energy coupling to the transport system. The chain is Zinc import ATP-binding protein ZnuC from Wolbachia sp. subsp. Brugia malayi (strain TRS).